The primary structure comprises 180 residues: ADP-ribosylation factor 4 (180 aa).

A lipid anchor (N-myristoyl glycine) is attached at Gly2. GTP-binding positions include 24-31 (GLDAAGKT), 67-71 (DVGGQ), and 126-129 (NKQD). Ser147 carries the post-translational modification Phosphoserine.

It belongs to the small GTPase superfamily. Arf family. Forms a complex containing RAB11A, ASAP1, RAB3IP, RAP11FIP3 and ARF4; the complex promotes preciliary trafficking; the complex binds to RHO in photoreceptor cells and promotes RHO ciliary transport.

It is found in the golgi apparatus. The protein resides in the membrane. Its function is as follows. GTP-binding protein that functions as an allosteric activator of the cholera toxin catalytic subunit, an ADP-ribosyltransferase. Involved in protein trafficking; may modulate vesicle budding and uncoating within the Golgi apparatus. Part of the ciliary targeting complex containing Rab11, ASAP1, Rabin8/RAB3IP, RAB11FIP3 and ARF4, which direct preciliary vesicle trafficking to mother centriole and ciliogenesis initiation. This is ADP-ribosylation factor 4 (ARF4) from Bos taurus (Bovine).